Reading from the N-terminus, the 299-residue chain is Transcription factor MYB17 (299 aa).

2 consecutive HTH myb-type domains span residues 9–61 and 62–116; these read KIGL…TNYL and RPDI…KKRL. 2 consecutive DNA-binding regions (H-T-H motif) follow at residues 37 to 61 and 89 to 112; these read WRTL…TNYL and WAAI…NTHL.

As to quaternary structure, interacts with LFY. Expressed in the shoot apex, young flower buds, developing carpels and siliques. Expressed in floral meristem, initiating floral primordia and developing flowers.

The protein localises to the nucleus. In terms of biological role, transcription factor that may play a role in flower development by repressing ANT. Regulates the transition of meristem identity from vegetative growth to flowering. Acts downstream of LFY and upstream of AP1. Directly activates AP1 to promote floral fate. Together with LFY and AP1 may constitute a regulatory network that contributes to an abrupt and robust meristem identity transition. This Arabidopsis thaliana (Mouse-ear cress) protein is Transcription factor MYB17.